We begin with the raw amino-acid sequence, 1180 residues long: Integrin alpha-1 (1180 aa).

Residues 1–28 (MVPRRPASLEVTVACIWLLTVILGFCVS) form the signal peptide. Residues 29–1142 (FNVDVKNSMS…SKDGLPGRVP (1114 aa)) are Extracellular-facing. One copy of the FG-GAP 1 repeat lies at 30–91 (NVDVKNSMSF…CPVGRERAMP (62 aa)). An intrachain disulfide couples C82 to C92. N-linked (GlcNAc...) asparagine glycans are attached at residues N100, N105, N112, N217, N317, N341, N402, N418, and N459. Residues 101–160 (TSIPNVTEIKENMTFGSTLVTNPNGGFLACGPLYAYRCGHLHYTTGICSDVSPTFQVVNS) form an FG-GAP 2 repeat. The VWFA domain occupies 175–364 (IVLDGSNSIY…LGERIFALEA (190 aa)). One copy of the FG-GAP 3 repeat lies at 365–417 (TADQSAASFEMEMSQTGFSAHYSQDWVMLGAVGAYDWNGTVVMQKANQMVIPH). 4 FG-GAP repeats span residues 422–474 (QTEP…DGNI), 475–537 (NILQ…RFEY), 556–614 (SCTK…TIRE), and 618–678 (QRIP…FEPN). Positions 497, 499, 501, and 505 each coordinate Ca(2+). N531 carries N-linked (GlcNAc...) asparagine glycosylation. D579, N581, D583, D587, D641, N643, D645, and D649 together coordinate Ca(2+). C687 and C696 are joined by a disulfide. N698, N747, and N779 each carry an N-linked (GlcNAc...) asparagine glycan. C702 and C755 are oxidised to a cystine. A disulfide bridge connects residues C807 and C813. 8 N-linked (GlcNAc...) asparagine glycosylation sites follow: N820, N839, N882, N907, N938, N965, N973, and N1007. Residues C877 and C885 are joined by a disulfide bond. 2 cysteine pairs are disulfide-bonded: C1029-C1062 and C1066-C1073. N-linked (GlcNAc...) asparagine glycans are attached at residues N1084, N1103, and N1114. A helical membrane pass occupies residues 1143 to 1165 (LWVILLSAFAGLLLLMLLILALW). Topologically, residues 1166–1180 (KIGFFKRPLKKKMEK) are cytoplasmic. Residues 1168-1172 (GFFKR) carry the GFFKR motif motif.

The protein belongs to the integrin alpha chain family. Heterodimer of an alpha and a beta subunit. Alpha-1 associates with beta-1. Interacts with RAB21. Interacts (via cytoplasmic domain) with PTPN2; activates PTPN2 phosphatase activity towards EGFR and negatively regulates EGF signaling.

The protein localises to the membrane. Functionally, integrin alpha-1/beta-1 is a receptor for laminin and collagen. It recognizes the proline-hydroxylated sequence G-F-P-G-E-R in collagen. Involved in anchorage-dependent, negative regulation of EGF-stimulated cell growth. The chain is Integrin alpha-1 (Itga1) from Rattus norvegicus (Rat).